A 232-amino-acid chain; its full sequence is Very-long-chain (3R)-3-hydroxyacyl-CoA dehydratase 4 (232 aa).

At Met-1–Tyr-19 the chain is on the cytoplasmic side. Residues Leu-20 to Val-40 traverse the membrane as a helical segment. The Lumenal segment spans residues Arg-41–Ala-56. A helical transmembrane segment spans residues Ile-57–Val-77. Over Gly-78–Tyr-112 the chain is Cytoplasmic. The chain crosses the membrane as a helical span at residues Val-113 to Met-133. Residues Leu-134 to Ser-135 lie on the Lumenal side of the membrane. Residues Val-136–Tyr-156 form a helical membrane-spanning segment. Tyr-156 is an active-site residue. Pro-157 is a topological domain (cytoplasmic). The chain crosses the membrane as a helical span at residues Leu-158–Gly-178. The active site involves Glu-163. The Lumenal portion of the chain corresponds to Thr-179–Ser-189. A helical transmembrane segment spans residues Ile-190–Thr-210. Over Tyr-211–Met-232 the chain is Cytoplasmic.

Belongs to the very long-chain fatty acids dehydratase HACD family. In terms of assembly, may interact with enzymes of the ELO family (including ELOVL1); with those enzymes that mediate condensation, the first of the four steps of the reaction cycle responsible for fatty acids elongation, may be part of a larger fatty acids elongase complex. In terms of tissue distribution, highly expressed in leukocytes, and low expression in heart, spleen, kidney, and placenta.

The protein localises to the endoplasmic reticulum membrane. The enzyme catalyses a very-long-chain (3R)-3-hydroxyacyl-CoA = a very-long-chain (2E)-enoyl-CoA + H2O. It carries out the reaction (3R)-hydroxyhexadecanoyl-CoA = (2E)-hexadecenoyl-CoA + H2O. Its pathway is lipid metabolism; fatty acid biosynthesis. Catalyzes the third of the four reactions of the long-chain fatty acids elongation cycle. This endoplasmic reticulum-bound enzymatic process, allows the addition of two carbons to the chain of long- and very long-chain fatty acids/VLCFAs per cycle. This enzyme catalyzes the dehydration of the 3-hydroxyacyl-CoA intermediate into trans-2,3-enoyl-CoA, within each cycle of fatty acid elongation. Thereby, it participates in the production of VLCFAs of different chain lengths that are involved in multiple biological processes as precursors of membrane lipids and lipid mediators. This is Very-long-chain (3R)-3-hydroxyacyl-CoA dehydratase 4 from Homo sapiens (Human).